Here is a 204-residue protein sequence, read N- to C-terminus: MALVTKLLVASRNRKKLAELRRVLDGAGLSGLTLLSLGDVSPLPETPETGVTFEDNALAKARDAFSATGLASVADDSGLEVAALGGMPGVLSARWSGRYGDDAANTALLLAQLCDVPDERRGAAFVSACALVSGSGEVVVRGEWPGTIAREPRGDGGFGYDPVFVPYGDDRTAAQLSPAEKDAVSHRGRALALLLPALRSLATG.

Position 11 to 16 (11 to 16 (SRNRKK)) interacts with substrate. Catalysis depends on Asp-76, which acts as the Proton acceptor. Asp-76 contacts Mg(2+). Substrate-binding positions include Ser-77, 158-161 (FGYD), Lys-181, and 186-187 (HR).

This sequence belongs to the HAM1 NTPase family. In terms of assembly, homodimer. Mg(2+) is required as a cofactor.

It carries out the reaction XTP + H2O = XMP + diphosphate + H(+). The catalysed reaction is dITP + H2O = dIMP + diphosphate + H(+). It catalyses the reaction ITP + H2O = IMP + diphosphate + H(+). Its function is as follows. Pyrophosphatase that catalyzes the hydrolysis of nucleoside triphosphates to their monophosphate derivatives, with a high preference for the non-canonical purine nucleotides XTP (xanthosine triphosphate), dITP (deoxyinosine triphosphate) and ITP. Seems to function as a house-cleaning enzyme that removes non-canonical purine nucleotides from the nucleotide pool, thus preventing their incorporation into DNA/RNA and avoiding chromosomal lesions. In Mycobacterium tuberculosis (strain CDC 1551 / Oshkosh), this protein is dITP/XTP pyrophosphatase.